Here is a 1416-residue protein sequence, read N- to C-terminus: DNA-directed RNA polymerase subunit beta' (1416 aa).

Residues cysteine 71, cysteine 73, cysteine 86, and cysteine 89 each coordinate Zn(2+). Mg(2+) contacts are provided by aspartate 461, aspartate 463, and aspartate 465. Cysteine 815, cysteine 892, cysteine 899, and cysteine 902 together coordinate Zn(2+).

The protein belongs to the RNA polymerase beta' chain family. The RNAP catalytic core consists of 2 alpha, 1 beta, 1 beta' and 1 omega subunit. When a sigma factor is associated with the core the holoenzyme is formed, which can initiate transcription. Mg(2+) serves as cofactor. Requires Zn(2+) as cofactor.

It carries out the reaction RNA(n) + a ribonucleoside 5'-triphosphate = RNA(n+1) + diphosphate. DNA-dependent RNA polymerase catalyzes the transcription of DNA into RNA using the four ribonucleoside triphosphates as substrates. This chain is DNA-directed RNA polymerase subunit beta', found in Blochmanniella pennsylvanica (strain BPEN).